Reading from the N-terminus, the 232-residue chain is Glutathione-specific gamma-glutamylcyclotransferase (232 aa).

Residue 10-15 (VLGYGS) participates in substrate binding. Glutamate 115 (proton acceptor) is an active-site residue.

The protein belongs to the gamma-glutamylcyclotransferase family. ChaC subfamily.

It localises to the cytoplasm. Its subcellular location is the nucleus. The catalysed reaction is glutathione = L-cysteinylglycine + 5-oxo-L-proline. Its function is as follows. Catalyzes the cleavage of glutathione into 5-oxo-L-proline and a Cys-Gly dipeptide. Acts specifically on glutathione, but not on other gamma-glutamyl peptides. Allows utilization of gluthathione through subsequent cleavage of the Cys-Gly dipeptide by Cys-Gly metallodipeptidase DUG1. The protein is Glutathione-specific gamma-glutamylcyclotransferase of Saccharomyces cerevisiae (strain ATCC 204508 / S288c) (Baker's yeast).